An 88-amino-acid polypeptide reads, in one-letter code: Large ribosomal subunit protein bL27 (88 aa).

The interval 1–24 is disordered; it reads MAHKKAGGSSRNGRDSAGQRRGVK.

This sequence belongs to the bacterial ribosomal protein bL27 family.

This chain is Large ribosomal subunit protein bL27, found in Syntrophobacter fumaroxidans (strain DSM 10017 / MPOB).